The sequence spans 554 residues: Peroxisomal membrane protein PEX29 (554 aa).

The Cytoplasmic portion of the chain corresponds to 1–145; the sequence is MDSVTNFFWN…PFMIMDELIK (145 aa). Composition is skewed to polar residues over residues 11-22 and 43-53; these read DTYNAGTPTRST and ISSGSRTSDPT. The segment at 11–73 is disordered; that stretch reads DTYNAGTPTR…PTSGGGFPST (63 aa). Low complexity predominate over residues 55–64; the sequence is GSLPSSSGQP. The chain crosses the membrane as a helical span at residues 146–166; sequence ILNWTNPAYTVSIMFLYTLII. Over 167 to 172 the chain is Peroxisomal; sequence LKPFQM. Residues 173–193 traverse the membrane as a helical segment; the sequence is LSSLPIFYLLFCVMVPQYLYI. The Cytoplasmic segment spans residues 194–264; that stretch reads HKPNPTSYLD…LQKFAFFTNE (71 aa). A helical transmembrane segment spans residues 265-285; sequence AISSFYFIVLLIIATLNFLYM. At 286 to 287 the chain is on the peroxisomal side; that stretch reads DK. A helical membrane pass occupies residues 288–308; it reads FIKLIPMRPVLILLGWGFFIA. Residues 309 to 554 lie on the Cytoplasmic side of the membrane; it reads SHPSNREYLL…ELTDTLNSTI (246 aa). Positions 500 to 532 are disordered; it reads GVTKGSMSGGLTHSSDDDRADEESINGTIPNLN.

The protein belongs to the PEX28-32 family. PEX29 subfamily.

The protein resides in the peroxisome membrane. Its function is as follows. Involved in the regulation of peroxisome number, size and distribution. The chain is Peroxisomal membrane protein PEX29 (PEX29) from Saccharomyces cerevisiae (strain ATCC 204508 / S288c) (Baker's yeast).